A 157-amino-acid chain; its full sequence is Cyclic pyranopterin monophosphate synthase (157 aa).

Substrate-binding positions include 73–75 (LCH) and 110–111 (ME). The active site involves D125.

It belongs to the MoaC family. As to quaternary structure, homohexamer; trimer of dimers.

The enzyme catalyses (8S)-3',8-cyclo-7,8-dihydroguanosine 5'-triphosphate = cyclic pyranopterin phosphate + diphosphate. It participates in cofactor biosynthesis; molybdopterin biosynthesis. Functionally, catalyzes the conversion of (8S)-3',8-cyclo-7,8-dihydroguanosine 5'-triphosphate to cyclic pyranopterin monophosphate (cPMP). This chain is Cyclic pyranopterin monophosphate synthase, found in Pseudomonas fluorescens (strain SBW25).